The following is a 396-amino-acid chain: MTTNTVSRKVAWLRVVTLAVAAFIFNTTEFVPVGLLSDIAQSFHMQTAQVGIMLTIYAWVVALMSLPFMLMTSQVERRKLLICLFVVFIASHVLSFLSWSFTVLVISRIGVAFAHAIFWSITASLAIRMAPAGKRAQALSLIATGTALAMVLGLPLGRIVGQYFGWRMTFFAIGIGAFITLLCLIKLLPLLPSEHSGSLKSLPLLFRRPALMSIYLLTVVVVTAHYTAYSYIEPFVQNIAGFSANFATALLLLLGGAGIIGSVIFGKLGNQYASALVSTAIALLLVCLALLLPAANSEIHLGVLSIFWGIAMMIIGLGMQVKVLALAPDATDVAMALFSGIFNIGIGAGALVGNQVSLHWSMSMIGYVGAVPAFAALIWSIIIFRRWPVTLEEQTQ.

12 helical membrane-spanning segments follow: residues 15 to 35, 50 to 70, 81 to 101, 103 to 123, 136 to 156, 170 to 190, 209 to 229, 246 to 266, 275 to 295, 299 to 319, 333 to 353, and 364 to 384; these read VVTL…PVGL, VGIM…PFML, LICL…SWSF, VLVI…SITA, AQAL…GLPL, FFAI…LLPL, PALM…YTAY, FATA…VIFG, ALVS…LPAA, IHLG…GLGM, VAMA…ALVG, and MIGY…IIIF.

It belongs to the major facilitator superfamily. SotB (TC 2.A.1.2) family.

The protein localises to the cell inner membrane. Its function is as follows. Involved in the efflux of sugars. The physiological role may be the reduction of the intracellular concentration of toxic sugars or sugar metabolites. The protein is Probable sugar efflux transporter of Escherichia coli O17:K52:H18 (strain UMN026 / ExPEC).